Consider the following 503-residue polypeptide: ATP synthase subunit alpha (503 aa).

170–177 (GDKQTGKT) serves as a coordination point for ATP.

This sequence belongs to the ATPase alpha/beta chains family. F-type ATPases have 2 components, CF(1) - the catalytic core - and CF(0) - the membrane proton channel. CF(1) has five subunits: alpha(3), beta(3), gamma(1), delta(1), epsilon(1). CF(0) has three main subunits: a(1), b(2) and c(9-12). The alpha and beta chains form an alternating ring which encloses part of the gamma chain. CF(1) is attached to CF(0) by a central stalk formed by the gamma and epsilon chains, while a peripheral stalk is formed by the delta and b chains.

It is found in the cell inner membrane. The catalysed reaction is ATP + H2O + 4 H(+)(in) = ADP + phosphate + 5 H(+)(out). Produces ATP from ADP in the presence of a proton gradient across the membrane. The alpha chain is a regulatory subunit. This Helicobacter acinonychis (strain Sheeba) protein is ATP synthase subunit alpha.